The sequence spans 354 residues: Alpha-D-ribose 1-methylphosphonate 5-triphosphate synthase subunit PhnI (354 aa).

The protein belongs to the PhnI family. Forms a complex with PhnG, PhnH, PhnJ and PhnK with the suggested composition PhnG(4)H(2)I(2)J(2)K.

It carries out the reaction methylphosphonate + ATP = alpha-D-ribose 1-methylphosphonate 5-triphosphate + adenine. The enzyme catalyses ATP + H2O = D-ribose 5-triphosphate + adenine. In terms of biological role, together with PhnG, PhnH and PhnL is required for the transfer of the ribose triphosphate moiety from ATP to methyl phosphonate. PhnI alone has nucleosidase activity, catalyzing the hydrolysis of ATP or GTP forming alpha-D-ribose 5-triphosphate and adenine or guanine, respectively. This chain is Alpha-D-ribose 1-methylphosphonate 5-triphosphate synthase subunit PhnI (phnI), found in Escherichia coli (strain K12).